The sequence spans 31 residues: Cytochrome b6-f complex subunit 6 (31 aa).

The helical transmembrane segment at 4–24 (ITSYFGFLLAALTITSALLIG) threads the bilayer.

Belongs to the PetL family. The 4 large subunits of the cytochrome b6-f complex are cytochrome b6, subunit IV (17 kDa polypeptide, PetD), cytochrome f and the Rieske protein, while the 4 small subunits are PetG, PetL, PetM and PetN. The complex functions as a dimer.

The protein resides in the plastid. It is found in the chloroplast thylakoid membrane. Component of the cytochrome b6-f complex, which mediates electron transfer between photosystem II (PSII) and photosystem I (PSI), cyclic electron flow around PSI, and state transitions. PetL is important for photoautotrophic growth as well as for electron transfer efficiency and stability of the cytochrome b6-f complex. The sequence is that of Cytochrome b6-f complex subunit 6 from Piper cenocladum (Ant piper).